A 114-amino-acid polypeptide reads, in one-letter code: Large ribosomal subunit protein bL19 (114 aa).

Belongs to the bacterial ribosomal protein bL19 family.

Its function is as follows. This protein is located at the 30S-50S ribosomal subunit interface and may play a role in the structure and function of the aminoacyl-tRNA binding site. This chain is Large ribosomal subunit protein bL19, found in Lactococcus lactis subsp. lactis (strain IL1403) (Streptococcus lactis).